The chain runs to 29 residues: Brevinin-2Ra (29 aa).

Cys-23 and Cys-29 are disulfide-bonded.

As to expression, expressed by the skin glands.

It localises to the secreted. Functionally, antimicrobial peptide. This chain is Brevinin-2Ra, found in Pelophylax ridibundus (Marsh frog).